The following is a 687-amino-acid chain: Mu-like prophage FluMu transposase A (687 aa).

An HTH Mu-type domain is found at 8–74; the sequence is THYSVYELAN…ELLLKTTPEQ (67 aa). Residues 398-417 constitute a DNA-binding region (H-T-H motif); the sequence is PIERAFSHGGLGDYVDKHLL.

Functionally, this transposase is essential for integration, replication-transposition, and excision of Mu-like viral DNA. This Haemophilus influenzae (strain ATCC 51907 / DSM 11121 / KW20 / Rd) protein is Mu-like prophage FluMu transposase A.